The following is a 474-amino-acid chain: Ribulose bisphosphate carboxylase large chain (474 aa).

Substrate is bound by residues Asn122 and Thr172. Lys174 acts as the Proton acceptor in catalysis. Lys176 is a substrate binding site. Residues Lys200, Asp202, and Glu203 each coordinate Mg(2+). An N6-carboxylysine modification is found at Lys200. The active-site Proton acceptor is the His293. Substrate contacts are provided by Arg294, His326, and Ser378.

Belongs to the RuBisCO large chain family. Type I subfamily. In terms of assembly, heterohexadecamer of 8 large chains and 8 small chains; disulfide-linked. The disulfide link is formed within the large subunit homodimers. The cofactor is Mg(2+). The disulfide bond which can form in the large chain dimeric partners within the hexadecamer appears to be associated with oxidative stress and protein turnover.

The protein resides in the carboxysome. The enzyme catalyses 2 (2R)-3-phosphoglycerate + 2 H(+) = D-ribulose 1,5-bisphosphate + CO2 + H2O. It catalyses the reaction D-ribulose 1,5-bisphosphate + O2 = 2-phosphoglycolate + (2R)-3-phosphoglycerate + 2 H(+). In terms of biological role, ruBisCO catalyzes two reactions: the carboxylation of D-ribulose 1,5-bisphosphate, the primary event in carbon dioxide fixation, as well as the oxidative fragmentation of the pentose substrate in the photorespiration process. Both reactions occur simultaneously and in competition at the same active site. The sequence is that of Ribulose bisphosphate carboxylase large chain from Synechococcus sp. (strain JA-3-3Ab) (Cyanobacteria bacterium Yellowstone A-Prime).